Here is a 126-residue protein sequence, read N- to C-terminus: Small ribosomal subunit protein uS13 (126 aa).

Positions 94–126 are disordered; the sequence is RNLPVHGQRTHTNARTRKGPRRAIAGKKKAGKK.

Belongs to the universal ribosomal protein uS13 family. In terms of assembly, part of the 30S ribosomal subunit. Forms a loose heterodimer with protein S19. Forms two bridges to the 50S subunit in the 70S ribosome.

In terms of biological role, located at the top of the head of the 30S subunit, it contacts several helices of the 16S rRNA. In the 70S ribosome it contacts the 23S rRNA (bridge B1a) and protein L5 of the 50S subunit (bridge B1b), connecting the 2 subunits; these bridges are implicated in subunit movement. Contacts the tRNAs in the A and P-sites. The protein is Small ribosomal subunit protein uS13 of Parafrankia sp. (strain EAN1pec).